Consider the following 208-residue polypeptide: Cell death-inducing p53-target protein 1 (208 aa).

Pro residues-rich tracts occupy residues 1–13 (MSSE…PGGP) and 36–67 (MQPP…PGFI). A disordered region spans residues 1 to 71 (MSSEPPPPYP…PQPGFIPPHM (71 aa)). The LITAF domain maps to 122-206 (ATTVTVLQGE…CKAYIYTYKR (85 aa)). Residues C142 and C145 each contribute to the Zn(2+) site. The interval 164–184 (LGFFCCFMGCDLGCCLIPCLI) is membrane-binding amphipathic helix. The Zn(2+) site is built by C194 and C197.

This sequence belongs to the CDIP1/LITAF family. Highly expressed in brain. Expressed at lower level in heart, skeletal muscle, kidney, pancreas and liver. Weakly or not expressed in placenta and lung.

The protein resides in the late endosome membrane. The protein localises to the lysosome membrane. Functionally, acts as an important p53/TP53-apoptotic effector. Regulates TNF-alpha-mediated apoptosis in a p53/TP53-dependent manner. In Homo sapiens (Human), this protein is Cell death-inducing p53-target protein 1 (CDIP1).